Reading from the N-terminus, the 590-residue chain is Ovarian abundant message protein (590 aa).

Positions 1 to 71 (MQGTDNAPPG…SPGQPLVEEQ (71 aa)) are disordered. Basic residues predominate over residues 18–29 (SPRRIRHVRRHY). A run of 27 repeats spans residues 66 to 71 (PLVEEQ), 72 to 77 (PLVEER), 78 to 83 (PPVEEQ), 84 to 89 (PLVEEQ), 90 to 95 (PLVEEQ), 96 to 101 (PLVEEQ), 102 to 107 (PLVEEQ), 108 to 113 (PLVEGQ), 114 to 119 (PLVEEQ), 120 to 125 (PLVEGQ), 126 to 131 (PPVEGQ), 132 to 137 (PLVEEQ), 138 to 143 (PLVEGQ), 144 to 149 (PLVEGQ), 150 to 155 (PLVEGQ), 156 to 161 (PLVEGQ), 162 to 167 (PLVGGQ), 168 to 173 (PLVGGQ), 174 to 179 (PLVEGQ), 180 to 185 (PLVEGQ), 300 to 305 (PLAGAP), 306 to 311 (PLAGVP), 312 to 317 (PLAVAL), 318 to 323 (PLAGAP), 324 to 329 (PLAGVP), 330 to 335 (PLAGAP), and 336 to 341 (PLAGAL). The segment at 66–185 (PLVEEQPLVE…VEGQPLVEGQ (120 aa)) is 20 X 6 AA tandem repeats of P-[LP]-V-[EG]-[EG]-[QR]. Residues 300 to 347 (PLAGAPPLAGVPPLAVALPLAGAPPLAGVPPLAGAPPLAGALPRAGVL) form an 8 X 6 AA approximate tandem repeats of P-L-A-[GV]-[AV]-[PL] region. A 2-8; approximate repeat occupies 342-347 (PRAGVL). 16 tandem repeats follow at residues 348-353 (RRAGVL), 354-359 (RRAGVL), 360-365 (RRAGVL), 366-371 (RRAGVL), 372-377 (RRAGVL), 378-383 (RRAGVL), 384-389 (RRAGVL), 390-395 (RRAGVL), 396-401 (RRAGVL), 402-407 (RRADVL), 408-413 (RRADVV), 419-424 (QQLADV), 425-430 (QRLADV), 431-436 (QRLADV), 437-442 (QRLADV), and 443-448 (QRLADV). The segment at 348–413 (RRAGVLRRAG…ADVLRRADVV (66 aa)) is 11 X 6 AA tandem repeats of approximate R-R-A-[GD]-V-[LV]. The interval 419–454 (QQLADVQRLADVQRLADVQRLADVQRLADVQRLVCV) is 6 X 6 AA approximate tandem repeats of Q-[QR]-L-A-D-V. The 4-6; approximate repeat unit spans residues 449–454 (QRLVCV).

As to expression, somatic ovarian tissue.

In Ascaris suum (Pig roundworm), this protein is Ovarian abundant message protein (OAM).